The following is a 1028-amino-acid chain: Beta-galactosidase (1028 aa).

Residues Asn-104 and Asp-203 each contribute to the substrate site. Residue Asp-203 participates in Na(+) binding. Mg(2+) is bound by residues Glu-418, His-420, and Glu-463. Substrate contacts are provided by residues Glu-463 and 539 to 542 (EYAH). Catalysis depends on Glu-463, which acts as the Proton donor. The Nucleophile role is filled by Glu-539. A Mg(2+)-binding site is contributed by Asn-599. Phe-603 and Asn-606 together coordinate Na(+). Positions 606 and 1004 each coordinate substrate.

This sequence belongs to the glycosyl hydrolase 2 family. As to quaternary structure, homodimer. Requires Mg(2+) as cofactor. Mn(2+) is required as a cofactor. The cofactor is Fe cation. It depends on Na(+) as a cofactor. K(+) serves as cofactor.

The catalysed reaction is Hydrolysis of terminal non-reducing beta-D-galactose residues in beta-D-galactosides.. Completely inhibited by Hg(2+), Cu(2+) Ag(2+), and partially inhibited by Zn(2+), imidazole and EDTA. Activated by Ca(2+), Co(2+), Ni(2+). This beta-galactosidase is also able to catalyze glycosyl transfer to a series of acceptors, including hexose, pentose, beta- or alpha-disaccharides, hexahydroxy alcohol, cyclitol, and aromatic glycosides, resulting in the production of galacto-oligosaccharides (GOS). The sequence is that of Beta-galactosidase (lacZ) from Enterobacter agglomerans (Erwinia herbicola).